The following is a 320-amino-acid chain: Olfactory receptor 51E2 (320 aa).

The Extracellular segment spans residues 1 to 24 (MSSCNFTHATFMLIGIPGLEEAHF). An N-linked (GlcNAc...) asparagine glycan is attached at Asn5. The helical transmembrane segment at 25 to 45 (WFGFPLLSMYAVALFGNCIVV) threads the bilayer. At 46-53 (FIVRTERS) the chain is on the cytoplasmic side. A helical transmembrane segment spans residues 54 to 74 (LHAPMYLFLCMLAAIDLALST). Residues 75–98 (STMPKILALFWFDSREITFDACLA) are Extracellular-facing. A disulfide bridge connects residues Cys96 and Cys178. A helical membrane pass occupies residues 99–119 (QMFFIHALSAIESTILLAMAF). Residues 120–138 (DRYVAICHPLRHAAVLNNT) are Cytoplasmic-facing. Residues 139 to 159 (VTVQIGMVALVRGSLFFFPLP) traverse the membrane as a helical segment. The Extracellular segment spans residues 160–195 (LLIKRLAFCHSNVLSHSYCVHQDVMKLAYTDTLPNV). The chain crosses the membrane as a helical span at residues 196–216 (VYGLTAILLVMGVDVMFISLS). At 217 to 236 (YFLIIRAVLQLPSKSERAKA) the chain is on the cytoplasmic side. A helical membrane pass occupies residues 237–257 (FGTCVSHIGVVLAFYVPLIGL). At 258 to 272 (SVVHRFGNSLDPIVH) the chain is on the extracellular side. The chain crosses the membrane as a helical span at residues 273-293 (VLMGDVYLLLPPVINPIIYGA). The Cytoplasmic segment spans residues 294–320 (KTKQIRTRVLAMFKISCDKDIEAGGNT).

It belongs to the G-protein coupled receptor 1 family. Expressed in brain and liver. Expressed only in some areas of the brain and in the olfactory epithelium.

The protein resides in the cell membrane. The protein localises to the early endosome membrane. Functionally, olfactory receptor. The activity of this receptor is probably mediated by G-proteins which induce elevation of intracellular Ca(2+), cAMP and activation of phosphorylation of the protein kinases PKA and MAPK3/MAPK1. Activation of OR51E2 may affect melanocyte proliferation, differentiation, and melanogenesis and may increase proliferation and migration of primary retinal pigment epithelial (RPE) cells. Activated by the short chain fatty acids (SCFA), acetate and propionate. In response to SCFA, may positively regulate renin secretion and increase blood pressure. May also be activated by steroid hormones and regulate cell proliferation. Activated by L-lactate in glomus cells. The polypeptide is Olfactory receptor 51E2 (Or51e2) (Rattus norvegicus (Rat)).